A 107-amino-acid polypeptide reads, in one-letter code: UPF0145 protein YbjQ (107 aa).

The protein belongs to the UPF0145 family.

This chain is UPF0145 protein YbjQ, found in Escherichia coli O139:H28 (strain E24377A / ETEC).